Consider the following 637-residue polypeptide: Threonine--tRNA ligase (637 aa).

In terms of domain architecture, TGS spans 1-61; sequence MPNVKLPDGN…KEDCSLIIVT (61 aa). The catalytic stretch occupies residues 242-533; sequence DHRKLGKALD…LIEHYAGKLP (292 aa). The Zn(2+) site is built by Cys-333, His-384, and His-510.

The protein belongs to the class-II aminoacyl-tRNA synthetase family. As to quaternary structure, homodimer. The cofactor is Zn(2+).

The protein localises to the cytoplasm. The enzyme catalyses tRNA(Thr) + L-threonine + ATP = L-threonyl-tRNA(Thr) + AMP + diphosphate + H(+). Catalyzes the attachment of threonine to tRNA(Thr) in a two-step reaction: L-threonine is first activated by ATP to form Thr-AMP and then transferred to the acceptor end of tRNA(Thr). Also edits incorrectly charged L-seryl-tRNA(Thr). The chain is Threonine--tRNA ligase from Legionella pneumophila subsp. pneumophila (strain Philadelphia 1 / ATCC 33152 / DSM 7513).